The primary structure comprises 48 residues: Large ribosomal subunit protein bL36c (48 aa).

The protein belongs to the bacterial ribosomal protein bL36 family.

Its subcellular location is the plastid. The protein resides in the chloroplast. The protein is Large ribosomal subunit protein bL36c (rpl36) of Guillardia theta (Cryptophyte).